A 114-amino-acid polypeptide reads, in one-letter code: Phosphorelay protein LuxU (114 aa).

The HPt domain maps to 19–114 (GSDNVPVLLD…TRDAYRSWTN (96 aa)). Histidine 58 is modified (phosphohistidine).

In terms of assembly, monomer.

Its function is as follows. Phosphorelay protein which receives sensory signals from LuxN and LuxP and transmits them to LuxO, at low cell density. LuxN and LuxP transfer a phosphoryl group to LuxU on His-58 and this phosphoryl group is further transferred to LuxO. At high cell density, as LuxU could function to establish an equilibrium between the aspartyl-phosphate of LuxN and the aspartyl-phosphate of LuxO, LuxU transfers phosphate from LuxO to LuxN (and probably LuxP) and finally phosphate is drained from the system. In Vibrio harveyi (Beneckea harveyi), this protein is Phosphorelay protein LuxU (luxU).